The chain runs to 1892 residues: Kinesin-like protein KIN-12E (1892 aa).

A disordered region spans residues 1–28 (MAGHGAGGRRASTSRAAARRVEAETNEN). Residues 64-401 (NVQVLIRIRP…LKFAQRAKLI (338 aa)) form the Kinesin motor domain. ATP is bound at residue 145–152 (GQTGSGKT). 5 coiled-coil regions span residues 406-438 (KVNE…QQNM), 486-526 (SLRR…TTVK), 1066-1139 (LFSN…LHEQ), 1303-1357 (KLLQ…LAEN), and 1396-1528 (ISET…SYQI). Positions 1633-1649 (LHESNSDTGHTKFEKPS) are enriched in basic and acidic residues. Residues 1633–1656 (LHESNSDTGHTKFEKPSGRTRGSG) are disordered. The stretch at 1780–1841 (MDQRKADLLE…LVGSNQAIAE (62 aa)) forms a coiled coil. The interval 1870–1892 (HARHEHSRLQAAKSSRTRRGSHQ) is disordered.

It belongs to the TRAFAC class myosin-kinesin ATPase superfamily. Kinesin family. KIN-12 subfamily.

The sequence is that of Kinesin-like protein KIN-12E from Oryza sativa subsp. japonica (Rice).